The chain runs to 347 residues: Virulence plasmid protein pGP2-D (347 aa).

The chain is Virulence plasmid protein pGP2-D from Chlamydia psittaci (Chlamydophila psittaci).